We begin with the raw amino-acid sequence, 190 residues long: Subtilisin inhibitor CLSI-II (190 aa).

2 disulfides stabilise this stretch: Cys44–Cys88 and Cys142–Cys149.

This sequence belongs to the protease inhibitor I3 (leguminous Kunitz-type inhibitor) family. In terms of assembly, forms active dimers on storage in aqueous solution, possibly through formation of an intermolecular disulfide bond. The N-terminal Asn is removed in about 50% of both the CLSI-II and CLSI-III chains.

It is found in the secreted. Inhibits subtilisin-type microbial serine proteases incuding proteinase K, subtilisin BPN', subtilisin Carlsberg and subtilisin E in a non-stoichiometric manner. Weakly inhibits A.oryzae protease and some metalloproteases including pronase E. Does not inhibit trypsin, chymotrypsin, S.griseus alkaline protease or A.lyticus lysyl endopeptidase. CLSI-II has a wider inhibitory specificity than CLSI-III. The sequence is that of Subtilisin inhibitor CLSI-II from Canavalia lineata (Beach bean).